The chain runs to 365 residues: Outer capsid protein sigma-3 (365 aa).

The CCHC-type zinc-finger motif lies at 51 to 73 (CMHCLGVVGSLQRKLKHLPHHRC).

Belongs to the orthoreovirus sigma-3 protein family. In terms of assembly, heterohexamer of three sigma-3 and three Mu-1 proteins. The RNA-binding form is probably a homodimer. Cleaved during virus the endosomal proteolytic disassembly of the outer capsid.

The protein localises to the virion. The protein resides in the host cytoplasm. It is found in the host nucleus. In terms of biological role, stimulates translation by blocking the activation of the dsRNA-dependent protein kinase EIF2AK2/PKR, thereby inhibiting the host interferon response. Sigma3 prevents the activation of EIF2AK2 by competing with the kinase for dsRNA-binding. Its function is as follows. The viral outer shell polypeptides, of which sigma-3 is one, impose structural constraints that prevent elongation of nascent transcripts by the RNA-dependent RNA polymerase lambda-3. The protein is Outer capsid protein sigma-3 (S4) of Reovirus type 3 (strain Dearing) (T3D).